A 348-amino-acid chain; its full sequence is tRNA N6-adenosine threonylcarbamoyltransferase (348 aa).

Positions 116 and 120 each coordinate Fe cation. Residues 138–142, D171, G184, D188, and N277 each bind substrate; that span reads QVSGG. Residue D309 coordinates Fe cation.

Belongs to the KAE1 / TsaD family. The cofactor is Fe(2+).

It is found in the cytoplasm. It carries out the reaction L-threonylcarbamoyladenylate + adenosine(37) in tRNA = N(6)-L-threonylcarbamoyladenosine(37) in tRNA + AMP + H(+). Functionally, required for the formation of a threonylcarbamoyl group on adenosine at position 37 (t(6)A37) in tRNAs that read codons beginning with adenine. Is involved in the transfer of the threonylcarbamoyl moiety of threonylcarbamoyl-AMP (TC-AMP) to the N6 group of A37, together with TsaE and TsaB. TsaD likely plays a direct catalytic role in this reaction. In Lactobacillus gasseri (strain ATCC 33323 / DSM 20243 / BCRC 14619 / CIP 102991 / JCM 1131 / KCTC 3163 / NCIMB 11718 / NCTC 13722 / AM63), this protein is tRNA N6-adenosine threonylcarbamoyltransferase.